A 218-amino-acid polypeptide reads, in one-letter code: Probable carboxylesterase clz11 (218 aa).

The short motif at 7–9 (LVG) is the Involved in the stabilization of the negatively charged intermediate by the formation of the oxyanion hole element. S77 is a catalytic residue.

The protein belongs to the 'GDXG' lipolytic enzyme family.

The enzyme catalyses a carboxylic ester + H2O = an alcohol + a carboxylate + H(+). It participates in secondary metabolite biosynthesis. Its function is as follows. Probable carboxylesterase; part of the gene cluster that mediates the biosynthesis of squalestatin S1 (SQS1, also known as zaragozic acid A), a heavily oxidized fungal polyketide that offers potent cholesterol lowering activity by targeting squalene synthase (SS). SQS1 is composed of a 2,8-dioxobicyclic[3.2.1]octane-3,4,5-tricarboxyclic acid core that is connected to two lipophilic polyketide arms. These initial steps feature the priming of an unusual benzoic acid starter unit onto the highly reducing polyketide synthase clz14, followed by oxaloacetate extension and product release to generate a tricarboxylic acid containing product. The phenylalanine ammonia lyase (PAL) clz10 and the acyl-CoA ligase clz12 are involved in transforming phenylalanine into benzoyl-CoA. The citrate synthase-like protein clz17 is involved in connecting the C-alpha-carbons of the hexaketide chain and oxaloacetate to afford the tricarboxylic acid unit. The potential hydrolytic enzymes, clz11 and clz13, are in close proximity to pks2 and may participate in product release. On the other side, the tetraketide arm is synthesized by a the squalestatin tetraketide synthase clz2 and enzymatically esterified to the core in the last biosynthetic step, by the acetyltransferase clz6. The biosynthesis of the tetraketide must involve 3 rounds of chain extension. After the first and second rounds methyl-transfer occurs, and in all rounds of extension the ketoreductase and dehydratase are active. The enoyl reductase and C-MeT of clz2 are not active in the final round of extension. The acetyltransferase clz6 appears to have a broad substrate selectivity for its acyl CoA substrate, allowing the in vitro synthesis of novel squalestatins. The biosynthesis of SQS1 requires several oxidative steps likely performed by oxidoreductases clz3, clz15 and clz16. Finally, in support of the identification of the cluster as being responsible for SQS1 production, the cluster contains a gene encoding a putative squalene synthase (SS) clz20, suggesting a likely mechanism for self-resistance. The polypeptide is Probable carboxylesterase clz11 (Cochliobolus lunatus (Filamentous fungus)).